We begin with the raw amino-acid sequence, 1019 residues long: Pleckstrin homology domain-containing family M member 2 (1019 aa).

Met-1 is modified (N-acetylmethionine). The tract at residues 1 to 310 is interaction with KIF5B; sequence MEPGEVKDRI…LDPPDACTEL (310 aa). The 123-residue stretch at 36 to 158 folds into the RUN domain; sequence RNHDKVLQRL…IRFELDLDAP (123 aa). Disordered stretches follow at residues 230-458, 471-525, and 557-581; these read SVPS…SEGL, SPST…REAQ, and QPSP…SEMV. Polar residues-rich tracts occupy residues 243–272 and 279–291; these read DTVS…QNPF and TVSS…VHTT. Basic residues predominate over residues 315–327; sequence VTKKKKIGKKKKS. Polar residues predominate over residues 417–427; that stretch reads LNGQLDPSTWC. Residue Ser-441 is modified to Phosphoserine. Residues 516 to 525 are compositionally biased toward basic and acidic residues; that stretch reads PLEDTTREAQ. The interaction with sifA stretch occupies residues 762 to 885; that stretch reads PCHCSPPEGT…VIPQGVAPSP (124 aa). Positions 771–873 constitute a PH domain; it reads TITKEGMLHY…WMQHLCQAVS (103 aa).

In terms of assembly, interacts with KLC2 (via TPR repeats). Interacts with KIF5B. Interacts with BORCS5. Interacts (via RUN domain) with ARL8B (GTP-bound form); PLEKHM1 and PLEKHM2 compete for interaction with ARL8B. Interacts with ARL8A. (Microbial infection) Interacts with the S.typhimurium sifA protein; required for S.typhimurium infection.

The protein localises to the cytoplasm. The protein resides in the lysosome membrane. In terms of biological role, plays a role in lysosomes movement and localization at the cell periphery acting as an effector of ARL8B. Required for ARL8B to exert its effects on lysosome location, recruits kinesin-1 to lysosomes and hence direct their movement toward microtubule plus ends. Binding to ARL8B provides a link from lysosomal membranes to plus-end-directed motility. Critical factor involved in NK cell-mediated cytotoxicity. Drives the polarization of cytolytic granules and microtubule-organizing centers (MTOCs) toward the immune synapse between effector NK lymphocytes and target cells. Required for maintenance of the Golgi apparatus organization. May play a role in membrane tubulation. This Homo sapiens (Human) protein is Pleckstrin homology domain-containing family M member 2.